Consider the following 157-residue polypeptide: Endoribonuclease YbeY (157 aa).

Zn(2+) is bound by residues H111, H115, and H121.

The protein belongs to the endoribonuclease YbeY family. Zn(2+) is required as a cofactor.

It is found in the cytoplasm. Single strand-specific metallo-endoribonuclease involved in late-stage 70S ribosome quality control and in maturation of the 3' terminus of the 16S rRNA. This Pseudomonas putida (strain ATCC 47054 / DSM 6125 / CFBP 8728 / NCIMB 11950 / KT2440) protein is Endoribonuclease YbeY.